The primary structure comprises 440 residues: Diaminopimelate decarboxylase (440 aa).

Lys-61 carries the post-translational modification N6-(pyridoxal phosphate)lysine. Pyridoxal 5'-phosphate contacts are provided by residues Gly-234 and 275-278 (EPGR). Residues Arg-278, Arg-314, and Tyr-318 each coordinate substrate. Catalysis depends on Cys-348, which acts as the Proton donor. 2 residues coordinate substrate: Glu-349 and Tyr-384. Tyr-384 lines the pyridoxal 5'-phosphate pocket. A compositionally biased stretch (low complexity) spans 421 to 431 (LAPELEPGPAL). The interval 421–440 (LAPELEPGPALSPRPSRDPR) is disordered.

It belongs to the Orn/Lys/Arg decarboxylase class-II family. LysA subfamily. As to quaternary structure, homodimer. It depends on pyridoxal 5'-phosphate as a cofactor.

The enzyme catalyses meso-2,6-diaminopimelate + H(+) = L-lysine + CO2. It participates in amino-acid biosynthesis; L-lysine biosynthesis via DAP pathway; L-lysine from DL-2,6-diaminopimelate: step 1/1. In terms of biological role, specifically catalyzes the decarboxylation of meso-diaminopimelate (meso-DAP) to L-lysine. The chain is Diaminopimelate decarboxylase from Streptomyces coelicolor (strain ATCC BAA-471 / A3(2) / M145).